Reading from the N-terminus, the 621-residue chain is tRNA uridine 5-carboxymethylaminomethyl modification enzyme MnmG (621 aa).

Residue 11 to 16 (GAGHAG) coordinates FAD. 271–285 (GPRYCPSVEDKINRF) contacts NAD(+).

Belongs to the MnmG family. In terms of assembly, homodimer. Heterotetramer of two MnmE and two MnmG subunits. Requires FAD as cofactor.

Its subcellular location is the cytoplasm. In terms of biological role, NAD-binding protein involved in the addition of a carboxymethylaminomethyl (cmnm) group at the wobble position (U34) of certain tRNAs, forming tRNA-cmnm(5)s(2)U34. This chain is tRNA uridine 5-carboxymethylaminomethyl modification enzyme MnmG, found in Cytophaga hutchinsonii (strain ATCC 33406 / DSM 1761 / CIP 103989 / NBRC 15051 / NCIMB 9469 / D465).